The chain runs to 39 residues: Photosystem II reaction center protein J (39 aa).

A helical membrane pass occupies residues 7-27; that stretch reads IPLWLVATIGGIAVLTVLGLF.

This sequence belongs to the PsbJ family. PSII is composed of 1 copy each of membrane proteins PsbA, PsbB, PsbC, PsbD, PsbE, PsbF, PsbH, PsbI, PsbJ, PsbK, PsbL, PsbM, PsbT, PsbX, PsbY, PsbZ, Psb30/Ycf12, at least 3 peripheral proteins of the oxygen-evolving complex and a large number of cofactors. It forms dimeric complexes.

The protein localises to the plastid. It localises to the chloroplast thylakoid membrane. One of the components of the core complex of photosystem II (PSII). PSII is a light-driven water:plastoquinone oxidoreductase that uses light energy to abstract electrons from H(2)O, generating O(2) and a proton gradient subsequently used for ATP formation. It consists of a core antenna complex that captures photons, and an electron transfer chain that converts photonic excitation into a charge separation. The protein is Photosystem II reaction center protein J of Cyanidioschyzon merolae (strain NIES-3377 / 10D) (Unicellular red alga).